The primary structure comprises 425 residues: 2-oxoglutarate and iron-dependent oxygenase JMJD4 homolog (425 aa).

The JmjC domain maps to 165–316 (AAQMPGYNFY…MVWQNLKNNL (152 aa)). Residues His212, Asp214, and His284 each contribute to the Fe cation site.

This sequence belongs to the JMJD6 family. Requires Fe(2+) as cofactor.

The protein resides in the nucleus. Its subcellular location is the cytoplasm. The catalysed reaction is L-lysyl-[protein] + 2-oxoglutarate + O2 = 4-hydroxy-L-lysyl-[protein] + succinate + CO2. Its function is as follows. Catalyzes the 2-oxoglutarate and iron-dependent C4-lysyl hydroxylation of eRF1 thereby promoting the translational termination efficiency of eRF1. May be involved in regulation of chromatin structure, promoting expansion of heterochromatin. The chain is 2-oxoglutarate and iron-dependent oxygenase JMJD4 homolog from Drosophila melanogaster (Fruit fly).